A 185-amino-acid chain; its full sequence is Jasmonate-induced protein homolog (185 aa).

The protein belongs to the jasmonate-induced protein family.

The chain is Jasmonate-induced protein homolog from Atriplex canescens (Fourwing saltbush).